The following is a 447-amino-acid chain: Probable glycine dehydrogenase (decarboxylating) subunit 1 (447 aa).

Belongs to the GcvP family. N-terminal subunit subfamily. In terms of assembly, the glycine cleavage system is composed of four proteins: P, T, L and H. In this organism, the P 'protein' is a heterodimer of two subunits.

It catalyses the reaction N(6)-[(R)-lipoyl]-L-lysyl-[glycine-cleavage complex H protein] + glycine + H(+) = N(6)-[(R)-S(8)-aminomethyldihydrolipoyl]-L-lysyl-[glycine-cleavage complex H protein] + CO2. Its function is as follows. The glycine cleavage system catalyzes the degradation of glycine. The P protein binds the alpha-amino group of glycine through its pyridoxal phosphate cofactor; CO(2) is released and the remaining methylamine moiety is then transferred to the lipoamide cofactor of the H protein. This chain is Probable glycine dehydrogenase (decarboxylating) subunit 1, found in Bacillus cereus (strain ATCC 10987 / NRS 248).